We begin with the raw amino-acid sequence, 558 residues long: Energy-dependent translational throttle protein EttA (558 aa).

2 ABC transporter domains span residues 6-256 (YTMK…AVQG) and 322-552 (VEVD…RVTH). Residue 38–45 (GPNGAGKS) participates in ATP binding. The interval 94–136 (GDIKIKLDRFNEVAELMATDYTDELMEEMGRLQEELDHADAWD) is arm. Positions 239-320 (GNYSTYLEKK…IPVGPRLGNV (82 aa)) are ptIM. 354-361 (GPNGVGKT) serves as a coordination point for ATP.

This sequence belongs to the ABC transporter superfamily. ABCF family. Translational throttle EttA subfamily. In terms of assembly, monomer. Probably contacts ribosomal proteins L1, L5, L33 and S7, the 16S and 23S rRNA and the P-site containing tRNA(fMet).

It localises to the cytoplasm. The catalysed reaction is ATP + H2O = ADP + phosphate + H(+). In terms of biological role, a translation factor that gates the progression of the 70S ribosomal initiation complex (IC, containing tRNA(fMet) in the P-site) into the translation elongation cycle by using a mechanism sensitive to the ATP/ADP ratio. Binds to the 70S ribosome E-site where it modulates the state of the translating ribosome during subunit translocation. ATP hydrolysis probably frees it from the ribosome, which can enter the elongation phase. The sequence is that of Energy-dependent translational throttle protein EttA from Mycobacterium tuberculosis (strain CDC 1551 / Oshkosh).